Reading from the N-terminus, the 953-residue chain is MNSTNSTNSTTTATSTNTSTQQVVTSLVSNGTIFGVFVIAFLILRIKLKRIYEPKSSFNLINEEKKPEPLPQGVWQWLKPLLKKSDNFVIQQAGLDGYFFLRYLFIIAIYCAVSMSYIFPILLSINASNGNHESGLNQLAYQNVKHRGRYFAHVFCGWIFFWGFLYIIYRELYFYTSMKQAVLASPRYAKKLSSRTVLFQTVPKQYLSEEEFSKLFDGVKRVWIARGSGSIEAMVKARDNMAIQLEGAETKYLKAALKKIKKLNKKSPQLSVSDNIAEYVPDKKRPHHKINKVAKFFFGKKVDTISYIKEELPKLNQKVKALQEDHENSSPFNSVFVEFESQYQAQVAAQITTYHAPLFMTPVYIGIEPSDVVWFNLRMFWWERLGREVSAVSAIVALVILWAFPVAFVGMISNITSLTNEVKWLKFIYKLPKQLLGLLTSLAPTVALAVLMSFLPKFIRGMAITQGAPSKQNVEYFTQQAYFAFQVIQVFLVTTLSSAATSTVTEIVKEPTKAMDLLASNLPKASNFFMSYVILQGLSISSGALLQIVPLILFYVLGAFLDGTVRKKWNRFCGLSSMQWGTAFPVYTNLAVITFSYSIISPLILLFAAVAFFLLYIAYLYNLTYVYQESPDARGIYYPRALFQTIVGIYIGQICLLGLFAVGKGWGPIVLQVIGICVTVLIHLHLSAAFDHLSKVIPVDTMKPLDGVSDTPSFKNIYKGIESTKVKKNTFGANIDMDGIKELPEFPIKKYHKRSESVTEQQVENSIFSENTFEYQFNPANEANADGHAINAENLIEDVPLLADGDTMKIPPAPWWKRFLKPHIYYSYKAVKSRLPEIYGLVDPDERVNDFDISHAYDYPAVSAQCPELWIPRDPFGFSKLLISDVSGVVEMNDENATIDENLKFTLRDVPPPYNDVKDEANGEANGEFDTASKENNPFADPKYKEEESRSAV.

A run of 11 helical transmembrane segments spans residues 23-43 (VVTS…AFLI), 103-123 (YLFI…PILL), 148-168 (GRYF…LYII), 392-412 (VSAI…VGMI), 435-455 (LLGL…MSFL), 481-501 (AYFA…SAAT), 540-560 (ISSG…LGAF), 575-595 (LSSM…VITF), 599-619 (IISP…YIAY), 642-662 (LFQT…LFAV), and 666-686 (WGPI…HLHL). Residues 910–953 (VPPPYNDVKDEANGEANGEFDTASKENNPFADPKYKEEESRSAV) are disordered. Over residues 942 to 953 (PKYKEEESRSAV) the composition is skewed to basic and acidic residues. Position 949 is a phosphoserine (serine 949).

The protein belongs to the CSC1 (TC 1.A.17) family.

It localises to the membrane. Acts as an osmosensitive calcium-permeable cation channel. This is an uncharacterized protein from Saccharomyces cerevisiae (strain ATCC 204508 / S288c) (Baker's yeast).